A 70-amino-acid chain; its full sequence is SPbeta prophage-derived uncharacterized protein YotJ (70 aa).

The chain is SPbeta prophage-derived uncharacterized protein YotJ (yotJ) from Bacillus subtilis (strain 168).